The sequence spans 348 residues: Aminotransferase atnJ (348 aa).

Arg-79 is a pyridoxal 5'-phosphate binding site. N6-(pyridoxal phosphate)lysine is present on Lys-180. Glu-216 is a pyridoxal 5'-phosphate binding site.

This sequence belongs to the class-IV pyridoxal-phosphate-dependent aminotransferase family. Requires pyridoxal 5'-phosphate as cofactor.

It functions in the pathway secondary metabolite biosynthesis. In terms of biological role, aminotransferase; part of the gene cluster that mediates the biosynthesis of aspercryptins, linear lipopeptides built from six amino acids including 2 highly unusual and nonproteogenic amino acids, 2-amino-octanoic acid (2aoa) and 2-amino-dodecanol (2adol). The core structure of aspercryptins is as follows: Ser/Ala-Thr-Ile/Val-2aoa-Asn-2adol. The first step of aspercryptin biosynthesis is the generation of the fatty acid precursors, octanoic and dodecanoic acids, by the FAS subunits atnF and atnM. The fatty acid precursors are likely transformed into the corresponding alpha-amino fatty acids in three steps. First, they are hydroxylated by the cytochrome P450 monooxygenase atnE, then oxidized to the corresponding alpha-keto acids by the NAD(P)-dependent oxidoreductase atnD, and finally converted to the alpha-amino fatty acids by the PLP-dependent aminotransferases atnH or atnJ. the alpha-amino fatty acids, 2-amino-octanoic and 2-amino-dodecanoic acids, are recognized, activated, and covalently tethered to the NRPS atnA by its fourth and sixth adenylation domains. The second module of atnA is the Thr module and contains an epimerase (E) domain responsible for the epimerization of Thr to D-allo-Thr. Additionally, despite atnA having only one epimerase domain, the first amino acid of aspercryptin A1 is D-Ser, suggesting that serine is either loaded directly as D-Ser on the first module or that the epimerase domain in the threonine module epimerizes both L-Ser and L-Thr. After condensation of the hexapeptide of aspercryptin, the C-terminal reductase (TE) domain might be involved in the reductive release and production of the aldehyde hexapeptide. Further reduction would generate aspercryptins. The variety of aspercryptins produced reflects the flexibility of the atnA NRPS, allowing incorporation of alanine instead of serine, valine for isoleucine, and a C10 fatty amino alcohol instead of the C12 version. AtnB seems to be involved in the selectivity for Ile versus Val by the third module. Moreover, type B, C and D aspercryptins have an additional N-terminal cichorine, acetyl and propionyl group respectively. The polypeptide is Aminotransferase atnJ (Emericella nidulans (strain FGSC A4 / ATCC 38163 / CBS 112.46 / NRRL 194 / M139) (Aspergillus nidulans)).